A 331-amino-acid polypeptide reads, in one-letter code: Neuropeptides B/W receptor type 1 (331 aa).

At 1–43 (MHNASYWGPERANTSCPAPAPTLGCPNASGPAPPLPPPLAVAV) the chain is on the extracellular side. N-linked (GlcNAc...) asparagine glycans are attached at residues asparagine 3, asparagine 13, and asparagine 27. Residues 44–66 (PVVYAVICAVGLAGNSAVLFVLL) traverse the membrane as a helical segment. The Cytoplasmic portion of the chain corresponds to 67–75 (RAPRRKTVT). Residues 76–100 (NLFILNLAVADELFTLVPPVNIADF) traverse the membrane as a helical segment. Over 101–115 (LLRRWPFGELLCKLV) the chain is Extracellular. Cysteine 112 and cysteine 191 are joined by a disulfide. The helical transmembrane segment at 116–135 (VAVDQYNTFSSLYFLTVMSA) threads the bilayer. Residues 136-160 (DRYLVVLATAESRRVAGRTYGAARA) lie on the Cytoplasmic side of the membrane. A helical transmembrane segment spans residues 161–180 (VSLAVWGVATLVVLPFAVFA). Over 181–205 (RLDEEQGRRQCVLVFPQPEALWWRA) the chain is Extracellular. The chain crosses the membrane as a helical span at residues 206–227 (SRLYTLVLGFAIPVSTICVLYT). Residues 228-251 (SLLCRLRAIRLDSHAKALDRAKKR) lie on the Cytoplasmic side of the membrane. The chain crosses the membrane as a helical span at residues 252-276 (VTVLVVAILAVCLLVWTPYHLSTVV). Topologically, residues 277-286 (ALTTDLPQTP) are extracellular. The helical transmembrane segment at 287–301 (LVIAVSYFITSLSYA) threads the bilayer. Residues 302–331 (NSCLNPFLYAFLDDSFRRSLRQLLACRTTS) are Cytoplasmic-facing.

Belongs to the G-protein coupled receptor 1 family.

The protein resides in the cell membrane. Interacts specifically with a number of opioid ligands. Receptor for neuropeptides B and W, which may be involved in neuroendocrine system regulation, food intake and the organization of other signals. The chain is Neuropeptides B/W receptor type 1 (NPBWR1) from Bos taurus (Bovine).